A 435-amino-acid chain; its full sequence is MASNSWNASSSPGEAREDGPEGLDKGLDNDAEGVWSPDIEQSFQEALAIYPPCGRRKIILSDEGKMYGRNELIARYIKLRTGKTRTRKQVSSHIQVLARKKVREYQVGIKAMNLDQVSKDKALQSMASMSSAQIVSASVLQNKFSPPSPLPQAVFSTSSRFWSSPPLLGQQPGPSQDIKPFAQPAYPIQPPLPPTLSSYEPLAPLPSAAASVPVWQDRTIASSRLRLLEYSAFMEVQRDPDTYSKHLFVHIGQTNPAFSDPPLEAVDVRQIYDKFPEKKGGLKELYEKGPPNAFFLVKFWADLNSTIQEGPGAFYGVSSQYSSADSMTISVSTKVCSFGKQVVEKVETEYARLENGRFVYRIHRSPMCEYMINFIHKLKHLPEKYMMNSVLENFTILQVVTSRDSQETLLVIAFVFEVSTSEHGAQHHVYKLVKD.

Positions 1 to 12 (MASNSWNASSSP) are enriched in polar residues. Positions 1-34 (MASNSWNASSSPGEAREDGPEGLDKGLDNDAEGV) are disordered. Ala2 bears the N-acetylalanine mark. Positions 14–28 (EAREDGPEGLDKGLD) are enriched in basic and acidic residues. The TEA DNA-binding region spans 28–104 (DNDAEGVWSP…QVLARKKVRE (77 aa)). Ser148 carries the phosphoserine modification. The tract at residues 173–435 (GPSQDIKPFA…QHHVYKLVKD (263 aa)) is transcriptional activation.

Interacts with YAP1 and WWTR1/TAZ. As to expression, preferentially expressed in the placenta.

It is found in the nucleus. Transcription factor which plays a key role in the Hippo signaling pathway, a pathway involved in organ size control and tumor suppression by restricting proliferation and promoting apoptosis. The core of this pathway is composed of a kinase cascade wherein MST1/MST2, in complex with its regulatory protein SAV1, phosphorylates and activates LATS1/2 in complex with its regulatory protein MOB1, which in turn phosphorylates and inactivates YAP1 oncoprotein and WWTR1/TAZ. Acts by mediating gene expression of YAP1 and WWTR1/TAZ, thereby regulating cell proliferation, migration and epithelial mesenchymal transition (EMT) induction. Binds to multiple functional elements of the human chorionic somatomammotropin-B gene enhancer. This is Transcriptional enhancer factor TEF-5 (TEAD3) from Homo sapiens (Human).